The following is a 761-amino-acid chain: Probable beta-galactosidase 2 (761 aa).

The N-terminal stretch at 1-23 is a signal peptide; it reads MGTIKNNFQLLWLILLIVVLVNG. N-linked (GlcNAc...) asparagine glycosylation is found at Asn39 and Asn110. The Proton donor role is filled by Glu195. Residue Asn206 is glycosylated (N-linked (GlcNAc...) asparagine). Catalysis depends on Glu267, which acts as the Nucleophile. Asn385, Asn405, Asn438, Asn501, Asn552, Asn553, Asn577, Asn592, Asn642, Asn690, and Asn696 each carry an N-linked (GlcNAc...) asparagine glycan.

Belongs to the glycosyl hydrolase 35 family.

It carries out the reaction Hydrolysis of terminal non-reducing beta-D-galactose residues in beta-D-galactosides.. Functionally, cleaves beta-linked terminal galactosyl residues from gangliosides, glycoproteins, and glycosaminoglycans. The polypeptide is Probable beta-galactosidase 2 (glb2) (Dictyostelium discoideum (Social amoeba)).